The sequence spans 573 residues: Phosphoenolpyruvate-protein phosphotransferase (573 aa).

The active-site Tele-phosphohistidine intermediate is the His190. Positions 297 and 333 each coordinate substrate. Residues Glu432 and Asp456 each coordinate Mg(2+). A phosphoenolpyruvate-binding site is contributed by 455 to 456 (ND). Arg466 contributes to the substrate binding site. Cys503 serves as the catalytic Proton donor.

It belongs to the PEP-utilizing enzyme family. As to quaternary structure, homodimer. Mg(2+) serves as cofactor.

It is found in the cytoplasm. The catalysed reaction is L-histidyl-[protein] + phosphoenolpyruvate = N(pros)-phospho-L-histidyl-[protein] + pyruvate. In terms of biological role, general (non sugar-specific) component of the phosphoenolpyruvate-dependent sugar phosphotransferase system (sugar PTS). This major carbohydrate active-transport system catalyzes the phosphorylation of incoming sugar substrates concomitantly with their translocation across the cell membrane. Enzyme I transfers the phosphoryl group from phosphoenolpyruvate (PEP) to the phosphoryl carrier protein (HPr). This Staphylococcus carnosus (strain TM300) protein is Phosphoenolpyruvate-protein phosphotransferase (ptsI).